Reading from the N-terminus, the 331-residue chain is Probable cytosolic iron-sulfur protein assembly protein Ciao1 (331 aa).

7 WD repeats span residues 12–51, 57–96, 97–136, 142–181, 188–227, 246–285, and 297–331; these read GHKG…WTTK, GHKR…ATLE, GHEN…EFEC, AHSQ…SDWD, SHTS…NDAG, EHSR…KRDA, and AHEQ…KLQE.

The protein belongs to the WD repeat CIA1 family.

In terms of biological role, essential component of the cytosolic iron-sulfur (Fe/S) protein assembly machinery. Required for the maturation of extramitochondrial Fe/S proteins. The chain is Probable cytosolic iron-sulfur protein assembly protein Ciao1 from Drosophila virilis (Fruit fly).